The chain runs to 261 residues: Indole-3-glycerol phosphate synthase (261 aa).

Belongs to the TrpC family.

The enzyme catalyses 1-(2-carboxyphenylamino)-1-deoxy-D-ribulose 5-phosphate + H(+) = (1S,2R)-1-C-(indol-3-yl)glycerol 3-phosphate + CO2 + H2O. The protein operates within amino-acid biosynthesis; L-tryptophan biosynthesis; L-tryptophan from chorismate: step 4/5. In Burkholderia pseudomallei (strain 1710b), this protein is Indole-3-glycerol phosphate synthase.